The primary structure comprises 216 residues: MLGIGAFKQRMPRSGEALPGRTQALPLHNTHLINGHPLRGEFTGLAQVQFGLGCFWGAERKFWNVPGVYTTAVGYAGGKTPNATYSEVCSGQTGHTEAVLVVYDAQAVSFEQLLRTFWESHDPTQGMQQGSDVGTQYRSAIYCSTQAQYDAAIASRDAYQQQLTAAGYGDITTEILYPAPTFYYAEDDHQQYLAKHPNGYCGLGGTGVSCPIGLDA.

Residue Cys-54 is part of the active site.

The protein belongs to the MsrA Met sulfoxide reductase family.

The catalysed reaction is L-methionyl-[protein] + [thioredoxin]-disulfide + H2O = L-methionyl-(S)-S-oxide-[protein] + [thioredoxin]-dithiol. It catalyses the reaction [thioredoxin]-disulfide + L-methionine + H2O = L-methionine (S)-S-oxide + [thioredoxin]-dithiol. In terms of biological role, has an important function as a repair enzyme for proteins that have been inactivated by oxidation. Catalyzes the reversible oxidation-reduction of methionine sulfoxide in proteins to methionine. The polypeptide is Peptide methionine sulfoxide reductase MsrA (Xanthomonas campestris pv. campestris (strain 8004)).